Here is a 177-residue protein sequence, read N- to C-terminus: Large ribosomal subunit protein uL6 (177 aa).

Belongs to the universal ribosomal protein uL6 family. Part of the 50S ribosomal subunit.

This protein binds to the 23S rRNA, and is important in its secondary structure. It is located near the subunit interface in the base of the L7/L12 stalk, and near the tRNA binding site of the peptidyltransferase center. The protein is Large ribosomal subunit protein uL6 of Albidiferax ferrireducens (strain ATCC BAA-621 / DSM 15236 / T118) (Rhodoferax ferrireducens).